We begin with the raw amino-acid sequence, 133 residues long: Large ribosomal subunit protein bL20 (133 aa).

Belongs to the bacterial ribosomal protein bL20 family.

Functionally, binds directly to 23S ribosomal RNA and is necessary for the in vitro assembly process of the 50S ribosomal subunit. It is not involved in the protein synthesizing functions of that subunit. The protein is Large ribosomal subunit protein bL20 of Bartonella bacilliformis (strain ATCC 35685 / KC583 / Herrer 020/F12,63).